A 419-amino-acid polypeptide reads, in one-letter code: UDP-N-acetylglucosamine 1-carboxyvinyltransferase (419 aa).

Residue 22–23 (KN) participates in phosphoenolpyruvate binding. Residue Arg92 participates in UDP-N-acetyl-alpha-D-glucosamine binding. Catalysis depends on Cys116, which acts as the Proton donor. Position 116 is a 2-(S-cysteinyl)pyruvic acid O-phosphothioketal (Cys116). Residues Asp307 and Val329 each coordinate UDP-N-acetyl-alpha-D-glucosamine.

This sequence belongs to the EPSP synthase family. MurA subfamily.

The protein resides in the cytoplasm. The catalysed reaction is phosphoenolpyruvate + UDP-N-acetyl-alpha-D-glucosamine = UDP-N-acetyl-3-O-(1-carboxyvinyl)-alpha-D-glucosamine + phosphate. Its pathway is cell wall biogenesis; peptidoglycan biosynthesis. Its function is as follows. Cell wall formation. Adds enolpyruvyl to UDP-N-acetylglucosamine. The sequence is that of UDP-N-acetylglucosamine 1-carboxyvinyltransferase from Pseudothermotoga lettingae (strain ATCC BAA-301 / DSM 14385 / NBRC 107922 / TMO) (Thermotoga lettingae).